A 311-amino-acid chain; its full sequence is Protein N-terminal asparagine amidohydrolase (311 aa).

In terms of assembly, monomer.

It localises to the cytoplasm. It catalyses the reaction N-terminal L-asparaginyl-[protein] + H2O + H(+) = N-terminal L-aspartyl-[protein] + NH4(+). In terms of biological role, N-terminal asparagine deamidase that mediates deamidation of N-terminal asparagine residues to aspartate. Required for the ubiquitin-dependent turnover of intracellular proteins that initiate with Met-Asn. These proteins are acetylated on the retained initiator methionine and can subsequently be modified by the removal of N-acetyl methionine by acylaminoacid hydrolase (AAH). Conversion of the resulting N-terminal asparagine to aspartate by NTAN1/PNAD renders the protein susceptible to arginylation, polyubiquitination and degradation as specified by the N-end rule. This enzyme does not act on substrates with internal or C-terminal asparagines and does not act on glutamine residues in any position. This chain is Protein N-terminal asparagine amidohydrolase (NTAN1), found in Sus scrofa (Pig).